A 700-amino-acid polypeptide reads, in one-letter code: Polyribonucleotide nucleotidyltransferase (700 aa).

Residues D486 and D492 each contribute to the Mg(2+) site. One can recognise a KH domain in the interval 554 to 613; sequence PKIISTTINPDKIREVIGPGGKMINKIIDETGVKIDINDDGRVYIFSSDIQAGKRARSMI. The region spanning 623–691 is the S1 motif domain; the sequence is GQVFLGRVIR…KQGRVNLSRK (69 aa).

This sequence belongs to the polyribonucleotide nucleotidyltransferase family. It depends on Mg(2+) as a cofactor.

Its subcellular location is the cytoplasm. The enzyme catalyses RNA(n+1) + phosphate = RNA(n) + a ribonucleoside 5'-diphosphate. In terms of biological role, involved in mRNA degradation. Catalyzes the phosphorolysis of single-stranded polyribonucleotides processively in the 3'- to 5'-direction. The sequence is that of Polyribonucleotide nucleotidyltransferase from Acetivibrio thermocellus (strain ATCC 27405 / DSM 1237 / JCM 9322 / NBRC 103400 / NCIMB 10682 / NRRL B-4536 / VPI 7372) (Clostridium thermocellum).